A 164-amino-acid chain; its full sequence is ATP synthase subunit b 1 (164 aa).

The helical transmembrane segment at 4 to 24 (MELAELWVAVAFFVFVGILLY) threads the bilayer.

The protein belongs to the ATPase B chain family. As to quaternary structure, F-type ATPases have 2 components, F(1) - the catalytic core - and F(0) - the membrane proton channel. F(1) has five subunits: alpha(3), beta(3), gamma(1), delta(1), epsilon(1). F(0) has three main subunits: a(1), b(2) and c(10-14). The alpha and beta chains form an alternating ring which encloses part of the gamma chain. F(1) is attached to F(0) by a central stalk formed by the gamma and epsilon chains, while a peripheral stalk is formed by the delta and b chains.

Its subcellular location is the cell inner membrane. F(1)F(0) ATP synthase produces ATP from ADP in the presence of a proton or sodium gradient. F-type ATPases consist of two structural domains, F(1) containing the extramembraneous catalytic core and F(0) containing the membrane proton channel, linked together by a central stalk and a peripheral stalk. During catalysis, ATP synthesis in the catalytic domain of F(1) is coupled via a rotary mechanism of the central stalk subunits to proton translocation. In terms of biological role, component of the F(0) channel, it forms part of the peripheral stalk, linking F(1) to F(0). The chain is ATP synthase subunit b 1 from Azorhizobium caulinodans (strain ATCC 43989 / DSM 5975 / JCM 20966 / LMG 6465 / NBRC 14845 / NCIMB 13405 / ORS 571).